Reading from the N-terminus, the 148-residue chain is Protein Smg homolog (148 aa).

It belongs to the Smg family.

In Thiobacillus denitrificans (strain ATCC 25259 / T1), this protein is Protein Smg homolog.